The primary structure comprises 107 residues: Phosphoribosyl-ATP pyrophosphatase (107 aa).

This sequence belongs to the PRA-PH family.

The protein localises to the cytoplasm. It carries out the reaction 1-(5-phospho-beta-D-ribosyl)-ATP + H2O = 1-(5-phospho-beta-D-ribosyl)-5'-AMP + diphosphate + H(+). Its pathway is amino-acid biosynthesis; L-histidine biosynthesis; L-histidine from 5-phospho-alpha-D-ribose 1-diphosphate: step 2/9. In Caulobacter vibrioides (strain ATCC 19089 / CIP 103742 / CB 15) (Caulobacter crescentus), this protein is Phosphoribosyl-ATP pyrophosphatase (hisE).